The sequence spans 984 residues: MSKSRAVVELTARFDLGGDDKIRALSLSPISDSQTLVYLGTYSGSLILLSLDTLTNTVSRLASVSLSPSPVESIFVLGEERGRVLALCNGYLFLLDSLLSQPAKRLGGLLKGINVIAKRVRGRDSSSTDLLPSEISTDSSSSKKFLQLLGAGNLVSDVRGNDSRHERVQQGHYVFAVAIGERMLLIELQCAEKEGLSGSFVVLKEILGIGGIKTLVWLDDYVIAGTVKGYSLISCVTGLSGVIFTLPDVSGPPLLKLLCKEWKVLLLVDNVGVVVDTNGQPIGGSLVFRRRPDSVGELSFYLVTVGDGKMEIHQKKSGACVQSVSFGPQGCGPSLLAADEAGDGNLLVVTTLSKLIFYRRVPYEEQIKDLLRKKRYRETISLVEELDSQGEISKDMLSFLHAQIGYLLLFDLRFEEAVNQFLKSEKMEPSEVFPFIMRDPNRWSLVVPRNRYWGLHPPPAPFEDVVDNGLMAIQRANFLRKAGMDTPVDEEFFSDPPSRADLLDSAIKNITRYLEISREKGLTLPVREGIDTLLMLLYRALNRVEDMENLASSGNNCVVEELETLLTESGHLRTLAFLYATKGMGAKALAIWRLFTKNYSSGLWQDSDDLVPYLHDNELIRLSGKEAAAAEAARILEEPCDPELALQHLSWIADVNPLFAIQVLTSDKRTEELSPEQVIQAIDPKKVEIIQRYFQWLIEERDYTDPQLHTSYALSLARSALECVEVQNGIQEADVPNGSEAHDSNVGSISLFEVDVRERLQAFLQSSDLYDPEEILELVEGSELWLEKAILYRRIGKETLVLQILALKLEDCAAAEQYCVEIGRPDAFMQLLDMYLDPQNGKEPMFKAAVRLLHNHGESLDPLQVLDKLSPDMPLKLASDTILRMLRARVHHHRQGQIVHNISRALDVDSRLARLEERSRHMQINDESLCDSCYARLGTKLFAMYPDDTIVCYKCYRRLGESKSVTGRDFKRDVLIKPGWLVNR.

The CNH domain maps to 21-339 (KIRALSLSPI…GCGPSLLAAD (319 aa)). One copy of the CHCR repeat lies at 663–844 (VLTSDKRTEE…YLDPQNGKEP (182 aa)).

Belongs to the TRAP1 family. In terms of assembly, component of the class C core vacuole/endosome tethering (CORVET) complex. Their common core is composed of the class C Vps core proteins VPS11, VCL1, VPS18 and VPS33, which in CORVET further associates with VPS3. Interacts directly with VPS11. Binds to RABF2A and RABF2B.

The protein resides in the endosome membrane. It localises to the cytoplasm. Its function is as follows. Essential protein required during embryogenesis. Believed to act as a component of the putative class C core vacuole/endosome tethering (CORVET) endosomal tethering complexes. CORVET is required for vacuolar transport of SYP22. Involved in root development. Plays a role in vesicle-mediated protein trafficking of the endocytic membrane transport pathway. In Arabidopsis thaliana (Mouse-ear cress), this protein is Vacuolar sorting protein 3.